The sequence spans 330 residues: D-alanine--D-alanine ligase (330 aa).

Residues 120–326 (KLWYDALGIP…FKTFLQKAVL (207 aa)) enclose the ATP-grasp domain. ATP is bound at residue 150 to 205 (AFKQWGGLFVKAACQGSSVGCYKVTSEEELAQAINGAFGYSQQVLVEKAVKPRELE). 3 residues coordinate Mg(2+): aspartate 280, glutamate 293, and asparagine 295.

This sequence belongs to the D-alanine--D-alanine ligase family. The cofactor is Mg(2+). Requires Mn(2+) as cofactor.

The protein resides in the cytoplasm. It carries out the reaction 2 D-alanine + ATP = D-alanyl-D-alanine + ADP + phosphate + H(+). The protein operates within cell wall biogenesis; peptidoglycan biosynthesis. In terms of biological role, cell wall formation. The protein is D-alanine--D-alanine ligase of Aliivibrio fischeri (strain MJ11) (Vibrio fischeri).